Consider the following 249-residue polypeptide: Expansin-A18 (249 aa).

An N-terminal signal peptide occupies residues methionine 1 to serine 21. An Expansin-like EG45 domain is found at glycine 41–glycine 154. Asparagine 116 carries an N-linked (GlcNAc...) asparagine glycan. One can recognise an Expansin-like CBD domain in the interval tyrosine 164–threonine 243.

The protein belongs to the expansin family. Expansin A subfamily. In terms of tissue distribution, expressed in roots.

The protein resides in the secreted. Its subcellular location is the cell wall. The protein localises to the membrane. Its function is as follows. May cause loosening and extension of plant cell walls by disrupting non-covalent bonding between cellulose microfibrils and matrix glucans. No enzymatic activity has been found. May be required for rapid internodal elongation in deepwater rice during submergence. The chain is Expansin-A18 (EXPA18) from Oryza sativa subsp. japonica (Rice).